We begin with the raw amino-acid sequence, 291 residues long: Segregation and condensation protein A (291 aa).

The protein belongs to the ScpA family. Component of a cohesin-like complex composed of ScpA, ScpB and the Smc homodimer, in which ScpA and ScpB bind to the head domain of Smc. The presence of the three proteins is required for the association of the complex with DNA.

It localises to the cytoplasm. Its function is as follows. Participates in chromosomal partition during cell division. May act via the formation of a condensin-like complex containing Smc and ScpB that pull DNA away from mid-cell into both cell halves. In Malacoplasma penetrans (strain HF-2) (Mycoplasma penetrans), this protein is Segregation and condensation protein A.